The chain runs to 213 residues: mRNA-decapping protein OPG121 (213 aa).

2 residues coordinate N(7)-methyl-GTP: Glu-16 and Arg-50. The Nudix hydrolase domain maps to 30 to 209; sequence KDTHVFAACI…EYLSYIYNML (180 aa). Positions 111–132 match the Nudix box motif; the sequence is GKLDKKESIKDCLRRELKEESD. Glu-126 acts as the Nucleophile in catalysis. Residues Glu-126 and Glu-130 each contribute to the Mg(2+) site. Asp-151 is a binding site for N(7)-methyl-GTP. Glu-183 serves as a coordination point for Mg(2+).

Belongs to the Nudix hydrolase family. It depends on Mg(2+) as a cofactor. The cofactor is Mn(2+).

The catalysed reaction is a 5'-end (N(7)-methyl 5'-triphosphoguanosine)-guanosine in mRNA + H2O = a 5'-end phospho-guanosine in mRNA + N(7)-methyl-GDP + 2 H(+). Decapping enzyme that remove the protective 5'-cap from both host and viral mRNAs to commit transcripts for decay by the cellular exonuclease XRN1. Accelerates viral and cellular mRNA turnover to eliminate competing host mRNAs and allow stage-specific synthesis of viral proteins. Acceleration of the turnover of cellular transcripts may even promote the shutoff of host protein synthesis. The protein is mRNA-decapping protein OPG121 (OPG121) of Vaccinia virus (strain Western Reserve) (VACV).